Consider the following 109-residue polypeptide: Parvalbumin beta (109 aa).

N-acetylalanine is present on alanine 2. The igE-binding stretch occupies residues 22 to 41; it reads AGSFDHKKFFKACGLSGKST. 2 EF-hand domains span residues 39–74 and 78–109; these read KSTD…FKAG and LSDA…MIKG. 11 residues coordinate Ca(2+): aspartate 52, aspartate 54, serine 56, phenylalanine 58, glutamate 60, glutamate 63, aspartate 91, aspartate 93, aspartate 95, lysine 97, and glutamate 102.

Belongs to the parvalbumin family. In terms of processing, the N-terminus is blocked. As to expression, expressed in both white and dark muscles (at protein level). About eight and a half times lower expression in the dark muscle than in the white muscle (at protein level).

In terms of biological role, in muscle, parvalbumin is thought to be involved in relaxation after contraction. It binds two calcium ions. The protein is Parvalbumin beta of Scomber japonicus (Chub mackerel).